The following is a 78-amino-acid chain: Small ribosomal subunit protein uS17 (78 aa).

Belongs to the universal ribosomal protein uS17 family. As to quaternary structure, part of the 30S ribosomal subunit.

In terms of biological role, one of the primary rRNA binding proteins, it binds specifically to the 5'-end of 16S ribosomal RNA. In Allorhizobium ampelinum (strain ATCC BAA-846 / DSM 112012 / S4) (Agrobacterium vitis (strain S4)), this protein is Small ribosomal subunit protein uS17.